The sequence spans 219 residues: Lipid transferase CIDEB (219 aa).

Residues 34-110 (PQRPFRVCDH…VLQSGQSWSP (77 aa)) form the CIDE-N domain.

Belongs to the CIDE family. Interacts with DFFA. Interacts with DFFB; inhibited by DFFB. Interacts with APOB. Interacts with PREB/SEC12; facilitating loading of SCAP-SREBP into COPII vesicles. As to quaternary structure, (Microbial infection) Interacts (via N-terminus) with HCV non-structural protein 5A (via N-terminus); this interaction seems to regulate the association of HCV particles with ApoE. In terms of tissue distribution, highly expressed in liver and small intestine and, at lower levels, in colon, kidney and spleen.

Its subcellular location is the lipid droplet. It is found in the endoplasmic reticulum membrane. It localises to the golgi apparatus. The protein localises to the cytoplasmic vesicle. The protein resides in the COPI-coated vesicle. Its function is as follows. Lipid transferase specifically expressed in hepatocytes, which promotes unilocular lipid droplet formation by mediating lipid droplet fusion. Lipid droplet fusion promotes their enlargement, restricting lipolysis and favoring lipid storage. Localizes on the lipid droplet surface, at focal contact sites between lipid droplets, and mediates atypical lipid droplet fusion by promoting directional net neutral lipid transfer from the smaller to larger lipid droplets. The transfer direction may be driven by the internal pressure difference between the contacting lipid droplet pair. Promotes lipid exchange and lipid droplet fusion in both small and large lipid droplet-containing hepatocytes. In addition to its role in lipid droplet fusion, also involved in cytoplasmic vesicle biogenesis and transport. Required for very-low-density lipoprotein (VLDL) lipidation and maturation. Probably involved in the biogenesis of VLDL transport vesicles by forming a COPII vesicle coat and facilitating the formation of endoplasmic reticulum-derived large vesicles. Also involved in sterol-regulated export of the SCAP-SREBP complex, composed of SCAP, SREBF1/SREBP1 and SREBF2/SREBP2, by promoting loading of SCAP-SREBP into COPII vesicles. May also activate apoptosis. Functionally, (Microbial infection) Involved in Hepatatis C virus (HCV) assembly and required for HCV entry into hepatocytes. This chain is Lipid transferase CIDEB, found in Homo sapiens (Human).